We begin with the raw amino-acid sequence, 1114 residues long: Transcriptional repressor NF-X1 (1114 aa).

Residues 9-26 (GTFKFNTDAAEFIPQERK) are interaction with PABPC1 and PABC4. 3 disordered regions span residues 20–220 (FIPQ…CRKP), 232–287 (QRRY…PTKS), and 299–325 (KSSRRVNQEKTAVRRQDPQVLSPFPRG). Phosphoserine is present on residues Ser-50, Ser-81, Ser-92, Ser-126, Ser-130, and Ser-147. Composition is skewed to polar residues over residues 72-103 (SYASGSKPKSPQGFFQSSNKSLKNHGLQNQPW) and 121-142 (LSEQTSDTSSLESVARSESGTN). Composition is skewed to basic and acidic residues over residues 143–156 (PREHSPSESEKEVV), 185–202 (LRSEWGNRMSPKSEDENT), 232–248 (QRRYPQKRPPWEVEGAR), and 304–315 (VNQEKTAVRRQD). At Ser-320 the chain carries Phosphoserine. The RING-type; atypical zinc-finger motif lies at 352–403 (CMVCCELVQVTAPVWSCQSCFHVFHLNCIKKWARSPASHADGQSGWRCPACQ). NF-X1-type zinc fingers lie at residues 447–465 (CPHSCNLLCHPGPCPPCPA), 500–519 (CGQHHCAELCHGGQCQPCRI), 561–580 (CGSHTCSQVCHPQPCQPCPR), 626–649 (CGSSDFIHTCEKLCHEGDCGPCSR), 688–707 (CGRHKCNEICCVDKEHKCPL), 715–734 (CGLHRCEEPCHRGNCQTCWQ), 826–848 (CGMHKCQRLCHKGECLVDEACKQ), and 857–878 (CGHPCMAPCHPSLPCPVTACKA). One can recognise an R3H domain in the interval 988–1056 (LKFVSDVEKE…KRNVVVTAVR (69 aa)). Positions 1071 to 1095 (ERETQTRPPPPIPHHRHQADKAPGS) are disordered.

Belongs to the NFX1 family. In terms of assembly, interacts with PABPC1 and PABPC4. In terms of tissue distribution, ubiquitously expressed, with highest levels in thymus.

The protein resides in the nucleus. Binds to the X-box motif of MHC class II genes and represses their expression. May play an important role in regulating the duration of an inflammatory response by limiting the period in which MHC class II molecules are induced by interferon-gamma. Together with PABPC1 or PABPC4, acts as a coactivator for TERT expression. Mediates E2-dependent ubiquitination. The sequence is that of Transcriptional repressor NF-X1 (Nfx1) from Mus musculus (Mouse).